Consider the following 351-residue polypeptide: Divinyl chlorophyll a/b light-harvesting protein PcbC (351 aa).

Transmembrane regions (helical) follow at residues 27-47, 81-101, 140-160, 202-222, 242-262, and 309-329; these read FIGSHIGHTGLICFAAGGSTL, GVWTGAGVATIAIFHLIFSAV, FILGHHLIFFGVANIWFVEWA, VMSGHAFLAFVQISGGAWHIA, AVLSWSLAGIGWMAIVAAFWC, and LSNVHYYFGFFFIQGHIWHAL.

It belongs to the PsbB/PsbC family. IsiA/Pcb subfamily. The antenna complex consists of divinyl chlorophylls (a and b) and divinyl chlorophyll a/b binding proteins and binds more divinyl chlorophyll b than does the antenna complex from high-light-adapted Prochlorococcus. Divinyl chlorophyll a serves as cofactor. The cofactor is divinyl chlorophyll b.

The protein resides in the cellular thylakoid membrane. In terms of biological role, the antenna complex functions as a light receptor, it captures and delivers excitation energy to photosystems II and I. The Prochlorales pcb genes are not related to higher plant LHCs. The sequence is that of Divinyl chlorophyll a/b light-harvesting protein PcbC (pcbC) from Prochlorococcus marinus (strain NATL2A).